We begin with the raw amino-acid sequence, 154 residues long: Myoglobin (154 aa).

The 147-residue stretch at 2 to 148 folds into the Globin domain; sequence GLSDGEWQLV…FRKDIAAKYK (147 aa). Serine 4 carries the phosphoserine modification. Histidine 65 is a binding site for nitrite. An O2-binding site is contributed by histidine 65. Residue threonine 68 is modified to Phosphothreonine. Histidine 94 contacts heme b.

It belongs to the globin family. As to quaternary structure, monomeric.

Its subcellular location is the cytoplasm. It localises to the sarcoplasm. The enzyme catalyses Fe(III)-heme b-[protein] + nitric oxide + H2O = Fe(II)-heme b-[protein] + nitrite + 2 H(+). It carries out the reaction H2O2 + AH2 = A + 2 H2O. Functionally, monomeric heme protein which primary function is to store oxygen and facilitate its diffusion within muscle tissues. Reversibly binds oxygen through a pentacoordinated heme iron and enables its timely and efficient release as needed during periods of heightened demand. Depending on the oxidative conditions of tissues and cells, and in addition to its ability to bind oxygen, it also has a nitrite reductase activity whereby it regulates the production of bioactive nitric oxide. Under stress conditions, like hypoxia and anoxia, it also protects cells against reactive oxygen species thanks to its pseudoperoxidase activity. The protein is Myoglobin (MB) of Peponocephala electra (Melon-headed whale).